The chain runs to 211 residues: uncharacterized protein (211 aa).

Residues 1-43 form a disordered region; it reads MRPEVGREPAALQPRQRPRSDHQLHRSPFTVPPRTPACRSPGP.

This is an uncharacterized protein from Homo sapiens (Human).